We begin with the raw amino-acid sequence, 344 residues long: Sorting nexin-16 (344 aa).

The span at 1–10 (MATPYVPVPM) shows a compositional bias: pro residues. Disordered stretches follow at residues 1–66 (MATP…NTSS) and 81–107 (ASSI…EDRP). The span at 14 to 26 (NSASSFTTNRNQR) shows a compositional bias: polar residues. The span at 27 to 40 (SSSFGSVSTSSNSS) shows a compositional bias: low complexity. Polar residues predominate over residues 41–66 (KGQLEDSNMGNFKQTSVPDQMDNTSS). One can recognise a PX domain in the interval 105-218 (DRPSTPTILG…EFLCLDDPPG (114 aa)). A 1,2-diacyl-sn-glycero-3-phospho-(1D-myo-inositol-3-phosphate)-binding residues include arginine 144, threonine 146, and arginine 184. Serine 222 carries the post-translational modification Phosphoserine. Residues 223-278 (LEESRAFCETLEETNYRLQKELLEKQKEMESLKKLLSEKQLHIDTLENRIRTLSLE) adopt a coiled-coil conformation.

This sequence belongs to the sorting nexin family. Homooligomer. Interacts with EGFR. In terms of tissue distribution, detected in placenta, lung, liver,heart and pancreas.

The protein localises to the early endosome membrane. It localises to the late endosome membrane. Its subcellular location is the cytoplasm. It is found in the lysosome. May be involved in several stages of intracellular trafficking. Plays a role in protein transport from early to late endosomes. Plays a role in protein transport to the lysosome. Promotes degradation of EGFR after EGF signaling. Plays a role in intracellular transport of vesicular stomatitis virus nucleocapsids from the endosome to the cytoplasm. The chain is Sorting nexin-16 (SNX16) from Homo sapiens (Human).